We begin with the raw amino-acid sequence, 165 residues long: Small ribosomal subunit protein uS5 (165 aa).

Positions 13–76 (LEENVVSINR…EDAKRHLIKV (64 aa)) constitute an S5 DRBM domain.

The protein belongs to the universal ribosomal protein uS5 family. Part of the 30S ribosomal subunit. Contacts proteins S4 and S8.

Its function is as follows. With S4 and S12 plays an important role in translational accuracy. Functionally, located at the back of the 30S subunit body where it stabilizes the conformation of the head with respect to the body. This Oenococcus oeni (strain ATCC BAA-331 / PSU-1) protein is Small ribosomal subunit protein uS5.